Here is a 639-residue protein sequence, read N- to C-terminus: Sperm-associated antigen 16 protein (639 aa).

The stretch at 146–218 (DVYSQVMLLE…GLKLHYASYE (73 aa)) forms a coiled coil. The interval 280–333 (RESGDRAGHSCEKENSSEGPTQKSLREAREEVGYKSKLKNEKKDSEFPVDMQPD) is disordered. 2 stretches are compositionally biased toward basic and acidic residues: residues 281-295 (ESGDRAGHSCEKENS) and 303-325 (SLREAREEVGYKSKLKNEKKDSE). WD repeat units follow at residues 358–397 (LHELPVSCIVMHPCRDYLISCSEDRLWKMVGLPQGNVLLT), 400–439 (GHTDWLSGCCFHPSGSKLATSSGDSTIKLWDLNKGECTLT), 442–481 (GHNHAVWSCTWHSCGDFVASASLDMTSKIWDVNSERCRYT), 484–523 (GHTDSVNSIEFFPFSNILLTASADKTLSVWDARTGKCEQS), 526–565 (GHMHSVNDATFTPRGHIIASCDARGVTKLWDFRKLIPIVS), 568–608 (VGPS…HKLV), and 609–639 (GHESEVHSVVFSHLGENLYSGGSDGTIRLWI).

In terms of assembly, interacts with SPAG6 and STK36. Phosphorylated by TSSK2. Expressed in testis.

Its subcellular location is the cytoplasm. It is found in the cytoskeleton. The protein localises to the cilium axoneme. The protein resides in the flagellum axoneme. It localises to the cell projection. Its subcellular location is the cilium. It is found in the flagellum. Functionally, necessary for sperm flagellar function. Plays a role in motile ciliogenesis. May help to recruit STK36 to the cilium or apical surface of the cell to initiate subsequent steps of construction of the central pair apparatus of motile cilia. This Mus musculus (Mouse) protein is Sperm-associated antigen 16 protein (Spag16).